A 277-amino-acid polypeptide reads, in one-letter code: Glutamate racemase (277 aa).

Substrate contacts are provided by residues 25–26 (DS) and 57–58 (YG). The Proton donor/acceptor role is filled by Cys89. 90 to 91 (NT) is a binding site for substrate. Catalysis depends on Cys204, which acts as the Proton donor/acceptor. Residue 205–206 (TH) coordinates substrate.

The protein belongs to the aspartate/glutamate racemases family.

It catalyses the reaction L-glutamate = D-glutamate. It functions in the pathway cell wall biogenesis; peptidoglycan biosynthesis. In terms of biological role, provides the (R)-glutamate required for cell wall biosynthesis. The polypeptide is Glutamate racemase (Brucella ovis (strain ATCC 25840 / 63/290 / NCTC 10512)).